A 558-amino-acid chain; its full sequence is Membrane protein insertase YidC (558 aa).

5 helical membrane passes run 6 to 26, 359 to 379, 434 to 454, 480 to 500, and 513 to 533; these read SFFIIVFLIVSFILWKIWDDE, FIHTYTIDNWGISIILITVII, LGGCLPLLIQMPIFLALYYML, ILPIIMGITMFFIQKLSPTTI, and LVIFTIFFLWFPSGLVLYYII.

This sequence belongs to the OXA1/ALB3/YidC family. Type 1 subfamily. As to quaternary structure, interacts with the Sec translocase complex via SecD. Specifically interacts with transmembrane segments of nascent integral membrane proteins during membrane integration.

The protein resides in the cell inner membrane. Required for the insertion and/or proper folding and/or complex formation of integral membrane proteins into the membrane. Involved in integration of membrane proteins that insert both dependently and independently of the Sec translocase complex, as well as at least some lipoproteins. Aids folding of multispanning membrane proteins. In Blochmanniella floridana, this protein is Membrane protein insertase YidC.